A 341-amino-acid polypeptide reads, in one-letter code: THO complex subunit 6 (341 aa).

7 WD repeats span residues 22-61, 74-112, 124-165, 166-205, 215-254, 256-293, and 295-339; these read RLHMTIFSQSVSPCGKFLAAGNNYGQIAIFSLSSALSSEA, AHDGPVYSMVSTDRHLLSAGDGEVKAWLWAEMLKKGCKE, LEVP…RVLR, GHTDYIHCLALRERSPEVLSGGEDGAVRLWDLRTAKEVQT, SRPHNGRWIGCLATDSDWMVCGGGPALTLWHLRSSTPTTI, PIRAPQKHVTFYQDLILSAGQGRCVNQWQLSGELKAQV, and GSSP…AFSL. A Phosphoserine modification is found at serine 180.

This sequence belongs to the WD repeat THOC6 family. In terms of assembly, component of the THO subcomplex, which is composed of THOC1, THOC2, THOC3, THOC5, THOC6 and THOC7. The THO subcomplex interacts with DDX39B to form the THO-DDX39B complex which multimerizes into a 28-subunit tetrameric assembly. Component of the transcription/export (TREX) complex at least composed of ALYREF/THOC4, DDX39B, SARNP/CIP29, CHTOP and the THO subcomplex; in the complex interacts with THOC5; together with THOC5 and THOC7, plays a key structural role in the oligomerization of the THO-DDX39B complex. TREX seems to have a dynamic structure involving ATP-dependent remodeling.

It is found in the nucleus. The protein localises to the nucleus speckle. Component of the THO subcomplex of the TREX complex which is thought to couple mRNA transcription, processing and nuclear export, and which specifically associates with spliced mRNA and not with unspliced pre-mRNA. Plays a key structural role in the oligomerization of the THO-DDX39B complex. TREX is recruited to spliced mRNAs by a transcription-independent mechanism, binds to mRNA upstream of the exon-junction complex (EJC) and is recruited in a splicing- and cap-dependent manner to a region near the 5' end of the mRNA where it functions in mRNA export to the cytoplasm via the TAP/NXF1 pathway. Plays a role in apoptosis negative control involved in brain development. Its function is as follows. (Microbial infection) The TREX complex is essential for the export of Kaposi's sarcoma-associated herpesvirus (KSHV) intronless mRNAs and infectious virus production. This is THO complex subunit 6 (THOC6) from Homo sapiens (Human).